A 560-amino-acid polypeptide reads, in one-letter code: Mitogen-activated protein kinase kinase kinase 3 (560 aa).

Positions 70–91 are disordered; it reads KRQSSSSSDNTSDKEEVETEET. Positions 303-557 constitute a Protein kinase domain; it reads WLKGQLLGRG…AAELLHHPFV (255 aa). ATP is bound by residues 309 to 317 and Lys-331; that span reads LGRGSYASV. The active-site Proton acceptor is Asp-426.

This sequence belongs to the protein kinase superfamily. STE Ser/Thr protein kinase family. MAP kinase kinase kinase subfamily. In terms of tissue distribution, expressed at low levels in roots, stems, siliques, leaves, seedlings and flower buds.

It catalyses the reaction L-seryl-[protein] + ATP = O-phospho-L-seryl-[protein] + ADP + H(+). It carries out the reaction L-threonyl-[protein] + ATP = O-phospho-L-threonyl-[protein] + ADP + H(+). The polypeptide is Mitogen-activated protein kinase kinase kinase 3 (Arabidopsis thaliana (Mouse-ear cress)).